A 124-amino-acid chain; its full sequence is Large ribosomal subunit protein bL12 (124 aa).

The protein belongs to the bacterial ribosomal protein bL12 family. In terms of assembly, homodimer. Part of the ribosomal stalk of the 50S ribosomal subunit. Forms a multimeric L10(L12)X complex, where L10 forms an elongated spine to which 2 to 4 L12 dimers bind in a sequential fashion. Binds GTP-bound translation factors.

Forms part of the ribosomal stalk which helps the ribosome interact with GTP-bound translation factors. Is thus essential for accurate translation. This is Large ribosomal subunit protein bL12 from Borreliella burgdorferi (strain ATCC 35210 / DSM 4680 / CIP 102532 / B31) (Borrelia burgdorferi).